We begin with the raw amino-acid sequence, 266 residues long: Syntaxin-71 (266 aa).

At 1–243 (MTVIDILTRV…TVNQLRSSRN (243 aa)) the chain is on the cytoplasmic side. A Phosphoserine modification is found at S12. A coiled-coil region spans residues 44-87 (ETQIETALEKAELVTKEKNRAAAVAMNAEIRRTKARLSEEVPKL). The tract at residues 122-146 (DGTAGGPKSTSAWTPSSTTSRPDIK) is disordered. Over residues 130–141 (STSAWTPSSTTS) the composition is skewed to low complexity. The 63-residue stretch at 172-234 (EMRKIKQEQG…KNTNVRLKDT (63 aa)) folds into the t-SNARE coiled-coil homology domain. The chain crosses the membrane as a helical; Anchor for type IV membrane protein span at residues 244 to 264 (FCIDIVLLCIVLGIAAYLYNV). Over 265–266 (LK) the chain is Vesicular.

Belongs to the syntaxin family. In terms of assembly, part of the t-SNARE complex. In terms of tissue distribution, expressed in root, leaf, stem, flower and silique.

The protein resides in the membrane. Functionally, vesicle trafficking protein that functions in the secretory pathway. This Arabidopsis thaliana (Mouse-ear cress) protein is Syntaxin-71 (SYP71).